The sequence spans 669 residues: UvrABC system protein B (669 aa).

The region spanning 26–183 is the Helicase ATP-binding domain; it reads EGLEDGLAHQ…RRLADLQYTR (158 aa). 39-46 is a binding site for ATP; the sequence is GVTGSGKT. Residues 92-115 carry the Beta-hairpin motif; it reads YYDYYQPEAYVPSSDTFIEKDASV. One can recognise a Helicase C-terminal domain in the interval 431–593; the sequence is QVDDLLSEIR…IVPKGLNKKI (163 aa). Positions 629-664 constitute a UVR domain; that stretch reads EKEIQRLETEMYQHAKDLEFEKAAQTRDKLQTLRAQ.

The protein belongs to the UvrB family. As to quaternary structure, forms a heterotetramer with UvrA during the search for lesions. Interacts with UvrC in an incision complex.

It is found in the cytoplasm. In terms of biological role, the UvrABC repair system catalyzes the recognition and processing of DNA lesions. A damage recognition complex composed of 2 UvrA and 2 UvrB subunits scans DNA for abnormalities. Upon binding of the UvrA(2)B(2) complex to a putative damaged site, the DNA wraps around one UvrB monomer. DNA wrap is dependent on ATP binding by UvrB and probably causes local melting of the DNA helix, facilitating insertion of UvrB beta-hairpin between the DNA strands. Then UvrB probes one DNA strand for the presence of a lesion. If a lesion is found the UvrA subunits dissociate and the UvrB-DNA preincision complex is formed. This complex is subsequently bound by UvrC and the second UvrB is released. If no lesion is found, the DNA wraps around the other UvrB subunit that will check the other stand for damage. In Proteus mirabilis (strain HI4320), this protein is UvrABC system protein B.